The primary structure comprises 144 residues: Bacilliredoxin BH1716 (144 aa).

Belongs to the bacilliredoxin family.

This chain is Bacilliredoxin BH1716, found in Halalkalibacterium halodurans (strain ATCC BAA-125 / DSM 18197 / FERM 7344 / JCM 9153 / C-125) (Bacillus halodurans).